Consider the following 139-residue polypeptide: Asp-hemolysin (139 aa).

Positions 1-5 (MASVQ) are excised as a propeptide. The segment at 47-79 (TSEDVQQKTAPPGGSVNVNSCGRSDASSGTTGG) is disordered. Over residues 62–75 (VNVNSCGRSDASSG) the composition is skewed to polar residues.

This sequence belongs to the aegerolysin family.

The polypeptide is Asp-hemolysin (Aspergillus fumigatus (strain ATCC MYA-4609 / CBS 101355 / FGSC A1100 / Af293) (Neosartorya fumigata)).